A 156-amino-acid polypeptide reads, in one-letter code: Translation initiation factor IF-1, chloroplastic (156 aa).

Residues 1-35 (MAASLTLMTSPPCSRSSKSPSPSPSPSLSCNQQQQ) form a disordered region. A chloroplast-targeting transit peptide spans 1-49 (MAASLTLMTSPPCSRSSKSPSPSPSPSLSCNQQQQYKPLLHHQWPPQIS). A compositionally biased stretch (low complexity) spans 10–20 (SPPCSRSSKSP). The S1-like domain maps to 72 to 148 (GGSPSVQEQK…TRGRITYRLR (77 aa)).

This sequence belongs to the IF-1 family. In terms of assembly, component of the 30S ribosomal translation pre-initiation complex which assembles on the 30S ribosome in the order IF-2 and IF-3, IF-1 and N-formylmethionyl-tRNA(fMet); mRNA recruitment can occur at any time during PIC assembly.

It localises to the plastid. The protein resides in the chloroplast. Functionally, one of the essential components for the initiation of protein synthesis. Stabilizes the binding of IF-2 and IF-3 on the 30S subunit to which N-formylmethionyl-tRNA(fMet) subsequently binds. Helps modulate mRNA selection, yielding the 30S pre-initiation complex (PIC). Upon addition of the 50S ribosomal subunit IF-1, IF-2 and IF-3 are released leaving the mature 70S translation initiation complex. The polypeptide is Translation initiation factor IF-1, chloroplastic (infA) (Mesembryanthemum crystallinum (Common ice plant)).